Here is a 419-residue protein sequence, read N- to C-terminus: CCA-adding enzyme (419 aa).

ATP-binding residues include Gly8 and Arg11. Gly8 and Arg11 together coordinate CTP. Asp21 and Asp23 together coordinate Mg(2+). The ATP site is built by Arg91, Arg137, and Arg140. 3 residues coordinate CTP: Arg91, Arg137, and Arg140.

This sequence belongs to the tRNA nucleotidyltransferase/poly(A) polymerase family. Bacterial CCA-adding enzyme type 2 subfamily. It depends on Mg(2+) as a cofactor.

The catalysed reaction is a tRNA precursor + 2 CTP + ATP = a tRNA with a 3' CCA end + 3 diphosphate. It catalyses the reaction a tRNA with a 3' CCA end + 2 CTP + ATP = a tRNA with a 3' CCACCA end + 3 diphosphate. Its function is as follows. Catalyzes the addition and repair of the essential 3'-terminal CCA sequence in tRNAs without using a nucleic acid template. Adds these three nucleotides in the order of C, C, and A to the tRNA nucleotide-73, using CTP and ATP as substrates and producing inorganic pyrophosphate. tRNA 3'-terminal CCA addition is required both for tRNA processing and repair. Also involved in tRNA surveillance by mediating tandem CCA addition to generate a CCACCA at the 3' terminus of unstable tRNAs. While stable tRNAs receive only 3'-terminal CCA, unstable tRNAs are marked with CCACCA and rapidly degraded. The protein is CCA-adding enzyme of Buchnera aphidicola subsp. Baizongia pistaciae (strain Bp).